Consider the following 420-residue polypeptide: Glucose-1-phosphate adenylyltransferase (420 aa).

Alpha-D-glucose 1-phosphate is bound by residues Tyr-107, Gly-172, 187 to 188 (EK), and Ser-205.

Belongs to the bacterial/plant glucose-1-phosphate adenylyltransferase family. In terms of assembly, homotetramer.

The enzyme catalyses alpha-D-glucose 1-phosphate + ATP + H(+) = ADP-alpha-D-glucose + diphosphate. Its pathway is glycan biosynthesis; glycogen biosynthesis. Functionally, involved in the biosynthesis of ADP-glucose, a building block required for the elongation reactions to produce glycogen. Catalyzes the reaction between ATP and alpha-D-glucose 1-phosphate (G1P) to produce pyrophosphate and ADP-Glc. This is Glucose-1-phosphate adenylyltransferase from Rhodopseudomonas palustris (strain TIE-1).